The following is a 319-amino-acid chain: Beta-ketoacyl-[acyl-carrier-protein] synthase III (319 aa).

Residues Cys113 and His246 contribute to the active site. The interval 247–251 is ACP-binding; that stretch reads QANIR. Residue Asn276 is part of the active site.

The protein belongs to the thiolase-like superfamily. FabH family. Homodimer.

The protein localises to the cytoplasm. It catalyses the reaction malonyl-[ACP] + acetyl-CoA + H(+) = 3-oxobutanoyl-[ACP] + CO2 + CoA. The protein operates within lipid metabolism; fatty acid biosynthesis. Catalyzes the condensation reaction of fatty acid synthesis by the addition to an acyl acceptor of two carbons from malonyl-ACP. Catalyzes the first condensation reaction which initiates fatty acid synthesis and may therefore play a role in governing the total rate of fatty acid production. Possesses both acetoacetyl-ACP synthase and acetyl transacylase activities. Its substrate specificity determines the biosynthesis of branched-chain and/or straight-chain of fatty acids. The chain is Beta-ketoacyl-[acyl-carrier-protein] synthase III from Ehrlichia canis (strain Jake).